The sequence spans 102 residues: MAGQKIRIRLKAYDHEVIDTSARKIVDTVTRTGAKVAGPVPLPTEKNVYCVIRSPHKYKDSREHFEMRTHKRLIDIIDPTPKTVDSLMRLDLPAGVDIEIKL.

The protein belongs to the universal ribosomal protein uS10 family. As to quaternary structure, part of the 30S ribosomal subunit.

In terms of biological role, involved in the binding of tRNA to the ribosomes. This chain is Small ribosomal subunit protein uS10, found in Nocardioides sp. (strain ATCC BAA-499 / JS614).